We begin with the raw amino-acid sequence, 242 residues long: Large ribosomal subunit protein uL3 (242 aa).

Gln151 is modified (N5-methylglutamine).

The protein belongs to the universal ribosomal protein uL3 family. Part of the 50S ribosomal subunit. Forms a cluster with proteins L14 and L19. Methylated by PrmB.

In terms of biological role, one of the primary rRNA binding proteins, it binds directly near the 3'-end of the 23S rRNA, where it nucleates assembly of the 50S subunit. The protein is Large ribosomal subunit protein uL3 of Zymomonas mobilis subsp. mobilis (strain ATCC 31821 / ZM4 / CP4).